The following is a 200-amino-acid chain: Methylthioribulose-1-phosphate dehydratase (200 aa).

The Zn(2+) site is built by H90 and H92.

It belongs to the aldolase class II family. MtnB subfamily. It depends on Zn(2+) as a cofactor.

The enzyme catalyses 5-(methylsulfanyl)-D-ribulose 1-phosphate = 5-methylsulfanyl-2,3-dioxopentyl phosphate + H2O. The protein operates within amino-acid biosynthesis; L-methionine biosynthesis via salvage pathway; L-methionine from S-methyl-5-thio-alpha-D-ribose 1-phosphate: step 2/6. Catalyzes the dehydration of methylthioribulose-1-phosphate (MTRu-1-P) into 2,3-diketo-5-methylthiopentyl-1-phosphate (DK-MTP-1-P). The sequence is that of Methylthioribulose-1-phosphate dehydratase from Sodalis glossinidius (strain morsitans).